Here is a 69-residue protein sequence, read N- to C-terminus: Large ribosomal subunit protein uL29 (69 aa).

The protein belongs to the universal ribosomal protein uL29 family.

This is Large ribosomal subunit protein uL29 from Sulfolobus acidocaldarius (strain ATCC 33909 / DSM 639 / JCM 8929 / NBRC 15157 / NCIMB 11770).